Reading from the N-terminus, the 101-residue chain is Small ribosomal subunit protein uS14 (101 aa).

The protein belongs to the universal ribosomal protein uS14 family. In terms of assembly, part of the 30S ribosomal subunit. Contacts proteins S3 and S10.

Functionally, binds 16S rRNA, required for the assembly of 30S particles and may also be responsible for determining the conformation of the 16S rRNA at the A site. In Brucella abortus (strain S19), this protein is Small ribosomal subunit protein uS14.